Reading from the N-terminus, the 1352-residue chain is DNA-directed RNA polymerase subunit beta (1352 aa).

This sequence belongs to the RNA polymerase beta chain family. The RNAP catalytic core consists of 2 alpha, 1 beta, 1 beta' and 1 omega subunit. When a sigma factor is associated with the core the holoenzyme is formed, which can initiate transcription.

It catalyses the reaction RNA(n) + a ribonucleoside 5'-triphosphate = RNA(n+1) + diphosphate. Functionally, DNA-dependent RNA polymerase catalyzes the transcription of DNA into RNA using the four ribonucleoside triphosphates as substrates. The chain is DNA-directed RNA polymerase subunit beta from Hydrogenovibrio crunogenus (strain DSM 25203 / XCL-2) (Thiomicrospira crunogena).